The sequence spans 214 residues: Dephospho-CoA kinase (214 aa).

A DPCK domain is found at 4-204; that stretch reads IVGLTGGIGS…QRYLQLAQQK (201 aa). 12–17 contributes to the ATP binding site; that stretch reads GSGKST.

Belongs to the CoaE family.

The protein localises to the cytoplasm. It carries out the reaction 3'-dephospho-CoA + ATP = ADP + CoA + H(+). It participates in cofactor biosynthesis; coenzyme A biosynthesis; CoA from (R)-pantothenate: step 5/5. Its function is as follows. Catalyzes the phosphorylation of the 3'-hydroxyl group of dephosphocoenzyme A to form coenzyme A. This chain is Dephospho-CoA kinase, found in Mannheimia succiniciproducens (strain KCTC 0769BP / MBEL55E).